The primary structure comprises 203 residues: uncharacterized protein (203 aa).

This is an uncharacterized protein from Pasteurella multocida (strain Pm70).